Here is a 593-residue protein sequence, read N- to C-terminus: Arginine--tRNA ligase (593 aa).

The 'HIGH' region signature appears at 138–148 (ANPTGPLHVGH).

The protein belongs to the class-I aminoacyl-tRNA synthetase family. Monomer.

It localises to the cytoplasm. The enzyme catalyses tRNA(Arg) + L-arginine + ATP = L-arginyl-tRNA(Arg) + AMP + diphosphate. The polypeptide is Arginine--tRNA ligase (Burkholderia ambifaria (strain ATCC BAA-244 / DSM 16087 / CCUG 44356 / LMG 19182 / AMMD) (Burkholderia cepacia (strain AMMD))).